A 289-amino-acid chain; its full sequence is Cell division protein ZipA (289 aa).

Residue Met1 is a topological domain, periplasmic. The chain crosses the membrane as a helical span at residues 2–22 (DIGLREWLIVIGLIVIAGILF). Over 23 to 289 (DGWRRMRGGK…HERRSLMQKR (267 aa)) the chain is Cytoplasmic. The tract at residues 65–141 (HREPSFDEQD…KEREKAPAVA (77 aa)) is disordered. Positions 81-99 (RETKERKGGKRQEEPRQGD) are enriched in basic and acidic residues. A compositionally biased stretch (acidic residues) spans 100–114 (LDLDEGLALEADPSD).

Belongs to the ZipA family. Interacts with FtsZ via their C-terminal domains.

The protein resides in the cell inner membrane. Functionally, essential cell division protein that stabilizes the FtsZ protofilaments by cross-linking them and that serves as a cytoplasmic membrane anchor for the Z ring. Also required for the recruitment to the septal ring of downstream cell division proteins. The sequence is that of Cell division protein ZipA from Pseudomonas aeruginosa (strain UCBPP-PA14).